The primary structure comprises 232 residues: UPF0502 protein Aave_3438 (232 aa).

It belongs to the UPF0502 family.

The protein is UPF0502 protein Aave_3438 of Paracidovorax citrulli (strain AAC00-1) (Acidovorax citrulli).